The following is a 352-amino-acid chain: N-acetyl-gamma-glutamyl-phosphate reductase (352 aa).

The active site involves Cys151.

This sequence belongs to the NAGSA dehydrogenase family. Type 1 subfamily.

It is found in the cytoplasm. The catalysed reaction is N-acetyl-L-glutamate 5-semialdehyde + phosphate + NADP(+) = N-acetyl-L-glutamyl 5-phosphate + NADPH + H(+). The protein operates within amino-acid biosynthesis; L-arginine biosynthesis; N(2)-acetyl-L-ornithine from L-glutamate: step 3/4. Its function is as follows. Catalyzes the NADPH-dependent reduction of N-acetyl-5-glutamyl phosphate to yield N-acetyl-L-glutamate 5-semialdehyde. This Renibacterium salmoninarum (strain ATCC 33209 / DSM 20767 / JCM 11484 / NBRC 15589 / NCIMB 2235) protein is N-acetyl-gamma-glutamyl-phosphate reductase.